A 377-amino-acid chain; its full sequence is Palmitoyltransferase PFA4 (377 aa).

At 1 to 9 (MAIKLKNRW) the chain is on the cytoplasmic side. A helical transmembrane segment spans residues 10–30 (LGVAIPAFLVALIGYGSHYFI). Residues 31–122 (LSNFLSWNEQ…NCVGHSNFPH (92 aa)) are Lumenal-facing. Positions 78-128 (NYCKKCRVYKPERAHHCKTCNQCVLAMDHHCPWTLNCVGHSNFPHFMRFLF) constitute a DHHC domain. The active-site S-palmitoyl cysteine intermediate is Cys108. The helical transmembrane segment at 123-143 (FMRFLFWVIFSTAYLLFLLIG) threads the bilayer. The Cytoplasmic segment spans residues 144 to 163 (RIYLLWSIRHTAFHHRSTSE). Residues 164-184 (IIFICIMTPMDAFVLLTVSSL) traverse the membrane as a helical segment. At 185 to 377 (LGRCIYNQCL…SDFGVDTELE (193 aa)) the chain is on the lumenal side.

Belongs to the DHHC palmitoyltransferase family. PFA4 subfamily.

The protein localises to the endoplasmic reticulum membrane. It carries out the reaction L-cysteinyl-[protein] + hexadecanoyl-CoA = S-hexadecanoyl-L-cysteinyl-[protein] + CoA. In terms of biological role, mediates the reversible addition of palmitate to target proteins, thereby regulating their membrane association and biological function. The protein is Palmitoyltransferase PFA4 of Kluyveromyces lactis (strain ATCC 8585 / CBS 2359 / DSM 70799 / NBRC 1267 / NRRL Y-1140 / WM37) (Yeast).